A 100-amino-acid chain; its full sequence is Protein Vpr (100 aa).

Residues 1–42 (MEQALENQGPAREPFNEWTLELLEELKEEAVRHFPRPWLQAC) are homooligomerization. 3 positions are modified to phosphoserine; by host: Ser-79, Ser-98, and Ser-100.

It belongs to the HIV-1 VPR protein family. In terms of assembly, homooligomer, may form homodimer. Interacts with p6-gag region of the Pr55 Gag precursor protein through a (Leu-X-X)4 motif near the C-terminus of the P6gag protein. Interacts with host UNG. May interact with host RAD23A/HHR23A. Interacts with host VPRBP/DCAF1, leading to hijack the CUL4A-RBX1-DDB1-DCAF1/VPRBP complex, mediating ubiquitination of host proteins such as TERT and ZGPAT and arrest of the cell cycle in G2 phase. Phosphorylated on several residues by host. These phosphorylations regulate VPR activity for the nuclear import of the HIV-1 pre-integration complex.

It is found in the virion. Its subcellular location is the host nucleus. It localises to the host extracellular space. Functionally, during virus replication, may deplete host UNG protein, and incude G2-M cell cycle arrest. Acts by targeting specific host proteins for degradation by the 26S proteasome, through association with the cellular CUL4A-DDB1 E3 ligase complex by direct interaction with host VPRPB/DCAF-1. Cell cycle arrest reportedly occurs within hours of infection and is not blocked by antiviral agents, suggesting that it is initiated by the VPR carried into the virion. Additionally, VPR induces apoptosis in a cell cycle dependent manner suggesting that these two effects are mechanistically linked. Detected in the serum and cerebrospinal fluid of AIDS patient, VPR may also induce cell death to bystander cells. During virus entry, plays a role in the transport of the viral pre-integration (PIC) complex to the host nucleus. This function is crucial for viral infection of non-dividing macrophages. May act directly at the nuclear pore complex, by binding nucleoporins phenylalanine-glycine (FG)-repeat regions. This Human immunodeficiency virus type 1 group O (isolate MVP5180) (HIV-1) protein is Protein Vpr.